The following is a 100-amino-acid chain: Small ribosomal subunit protein uS14c (100 aa).

Belongs to the universal ribosomal protein uS14 family. Part of the 30S ribosomal subunit.

It is found in the plastid. The protein resides in the chloroplast. Binds 16S rRNA, required for the assembly of 30S particles. The polypeptide is Small ribosomal subunit protein uS14c (Pleurastrum terricola (Filamentous green alga)).